Consider the following 254-residue polypeptide: Ribosomal RNA small subunit methyltransferase A (254 aa).

Residues Asn12, Leu14, Gly38, Glu59, Asp83, and Asn100 each contribute to the S-adenosyl-L-methionine site.

It belongs to the class I-like SAM-binding methyltransferase superfamily. rRNA adenine N(6)-methyltransferase family. RsmA subfamily.

Its subcellular location is the cytoplasm. It carries out the reaction adenosine(1518)/adenosine(1519) in 16S rRNA + 4 S-adenosyl-L-methionine = N(6)-dimethyladenosine(1518)/N(6)-dimethyladenosine(1519) in 16S rRNA + 4 S-adenosyl-L-homocysteine + 4 H(+). Functionally, specifically dimethylates two adjacent adenosines (A1518 and A1519) in the loop of a conserved hairpin near the 3'-end of 16S rRNA in the 30S particle. May play a critical role in biogenesis of 30S subunits. This chain is Ribosomal RNA small subunit methyltransferase A, found in Mycoplasma mobile (strain ATCC 43663 / 163K / NCTC 11711) (Mesomycoplasma mobile).